We begin with the raw amino-acid sequence, 1151 residues long: Semaphorin-5B (1151 aa).

The Extracellular portion of the chain corresponds to 1–1036; sequence MPCGFSPSPV…TDCAGFNLIH (1036 aa). The Sema domain maps to 103–553; it reads HPTVAFEDLQ…LRDGVLRVPL (451 aa). Asparagine 153 carries N-linked (GlcNAc...) asparagine glycosylation. Cystine bridges form between cysteine 172/cysteine 182 and cysteine 199/cysteine 208. N-linked (GlcNAc...) asparagine glycosylation is found at asparagine 236 and asparagine 345. Intrachain disulfides connect cysteine 322–cysteine 425 and cysteine 346–cysteine 388. Asparagine 436 is a glycosylation site (N-linked (GlcNAc...) asparagine). The region spanning 555–602 is the PSI domain; it reads RCAAYRSQGACLGARDPYCGWDGKQQRCSTLEDSSNMSLWTQNITACP. TSP type-1 domains lie at 664 to 720 and 722 to 771; these read NGAW…TPCP and PIFW…EGCP. Disulfide bonds link cysteine 676/cysteine 713, cysteine 680/cysteine 719, cysteine 691/cysteine 703, cysteine 734/cysteine 765, cysteine 738/cysteine 770, and cysteine 749/cysteine 755. Threonine 788 carries O-linked (GalNAc...) threonine glycosylation. 3 TSP type-1 domains span residues 853–908, 910–965, and 966–1010; these read SGGW…QACP, RGAW…QACP, and EGWS…RPCP. 6 cysteine pairs are disulfide-bonded: cysteine 865–cysteine 902, cysteine 869–cysteine 907, cysteine 880–cysteine 892, cysteine 922–cysteine 959, cysteine 926–cysteine 964, and cysteine 937–cysteine 949. Residues 1037–1057 traverse the membrane as a helical; Signal-anchor for type III membrane protein segment; the sequence is LVATGISCFLGSGLLTLAVYL. Topologically, residues 1058–1151 are cytoplasmic; the sequence is SCQHCQRQSQ…SPGQRCFPNS (94 aa).

The protein belongs to the semaphorin family.

It is found in the membrane. Its function is as follows. May act as a positive axonal guidance cue. In Homo sapiens (Human), this protein is Semaphorin-5B (SEMA5B).